The primary structure comprises 279 residues: Fatty-acid-binding protein 1 (279 aa).

Dodecanoate is bound by residues arginine 103, tyrosine 116, and serine 183.

The protein belongs to the chalcone isomerase family. As to expression, expressed in developing cotyledons, young seedlings, roots, seeds, embryos, macrospores, preanthesis and tapetum. Restricted to developing and reproductive tissues.

It localises to the plastid. The protein resides in the chloroplast stroma. Functionally, fatty-acid-binding protein. Interacts preferentially with saturated fatty acid. May be involved in alpha-linolenic (C18:3) metabolism. This chain is Fatty-acid-binding protein 1 (FAP1), found in Arabidopsis thaliana (Mouse-ear cress).